The sequence spans 402 residues: Putative F-box protein At3g20030 (402 aa).

One can recognise an F-box domain in the interval 1 to 56 (MTMMSDLSQDLLEEILSRVPRTSLGAVRSTCKRWNTLFKDRILCKAEETRDQFRFI).

The chain is Putative F-box protein At3g20030 from Arabidopsis thaliana (Mouse-ear cress).